The sequence spans 172 residues: C-phycocyanin beta chain (172 aa).

N4-methylasparagine is present on asparagine 72. (2R,3E)-phycocyanobilin contacts are provided by cysteine 82 and cysteine 153.

This sequence belongs to the phycobiliprotein family. As to quaternary structure, heterodimer of an alpha and a beta subunit, which further assembles into trimers and the trimers into hexamers. The basic functional unit of phycobiliproteins is a ring-shaped hexamer formed from two back-to-back trimers contacting via the alpha chain subunits. The trimers are composed of alpha/beta subunit heterodimers arranged around a three-fold axis of symmetry. The phycoerythrins also contain a gamma subunit which is located in the center of the hexamer. Contains two covalently linked bilin chromophores.

Its subcellular location is the plastid. It is found in the chloroplast thylakoid membrane. Functionally, light-harvesting photosynthetic bile pigment-protein from the phycobiliprotein complex (phycobilisome, PBS). Phycocyanin is the major phycobiliprotein in the PBS rod. In Aglaothamnion neglectum (Red alga), this protein is C-phycocyanin beta chain (cpcB).